Consider the following 418-residue polypeptide: MPGYYLWTIGCQMNQAESDRLGRLFELWGYSLADKAEDAELVLVNSCVVREHAENKVVNRLHLLRSLKNKNPKLKIALTGCLVGQDISLIKKKFPFVDYIFGPGSMPDWREIPEGFILPLRPPVSANVTIMQGCNNFCTYCVVPYRRGREKSRSIAEIGCEVAELVRRGSREVVLLGQNVDSYGHDLPEKPCLADLLSALHDITGLLRIRFLTSHPKDISQKLIDAMAHLPKVCRSLSLPVQSGDDTILASMRRGYTNQQYRELVERIKTAMPDISLQTDLIVGFPSENEEQFNQSYKLMADIGYDAIHVAAYSPRPQTVAARDMADDVPVIEKKRRLKLIEDLQKETVGKANAALMDTFAEVLVEGLQKNKWQGRTLGGKLVFLESDLPLEGCLVKVKIFKTSPWSLQAKLVNILES.

Residues 2-118 (PGYYLWTIGC…WREIPEGFIL (117 aa)) enclose the MTTase N-terminal domain. The [4Fe-4S] cluster site is built by C11, C47, C81, C134, C138, and C141. In terms of domain architecture, Radical SAM core spans 120–351 (LRPPVSANVT…EDLQKETVGK (232 aa)). The TRAM domain occupies 346–414 (KETVGKANAA…PWSLQAKLVN (69 aa)).

This sequence belongs to the methylthiotransferase family. MiaB subfamily. In terms of assembly, monomer. Requires [4Fe-4S] cluster as cofactor.

It localises to the cytoplasm. It carries out the reaction N(6)-dimethylallyladenosine(37) in tRNA + (sulfur carrier)-SH + AH2 + 2 S-adenosyl-L-methionine = 2-methylsulfanyl-N(6)-dimethylallyladenosine(37) in tRNA + (sulfur carrier)-H + 5'-deoxyadenosine + L-methionine + A + S-adenosyl-L-homocysteine + 2 H(+). In terms of biological role, catalyzes the methylthiolation of N6-(dimethylallyl)adenosine (i(6)A), leading to the formation of 2-methylthio-N6-(dimethylallyl)adenosine (ms(2)i(6)A) at position 37 in tRNAs that read codons beginning with uridine. This is tRNA-2-methylthio-N(6)-dimethylallyladenosine synthase from Dehalococcoides mccartyi (strain CBDB1).